A 142-amino-acid polypeptide reads, in one-letter code: Large ribosomal subunit protein bL21 (142 aa).

The span at 73–84 (KRRRQNSKRTRG) shows a compositional bias: basic residues. The interval 73-142 (KRRRQNSKRT…KAAAKAESAE (70 aa)) is disordered. The span at 107-125 (KAAEKKAPKADAAEGEAAK) shows a compositional bias: basic and acidic residues. The segment covering 126–135 (PKKAAPKKAA) has biased composition (basic residues).

This sequence belongs to the bacterial ribosomal protein bL21 family. In terms of assembly, part of the 50S ribosomal subunit. Contacts protein L20.

In terms of biological role, this protein binds to 23S rRNA in the presence of protein L20. This chain is Large ribosomal subunit protein bL21, found in Brucella canis (strain ATCC 23365 / NCTC 10854 / RM-666).